The sequence spans 72 residues: MMIPWQDLAPETLDSLIESFVLREGTDYGEHERSLEQKVADVKRQLQNGEILLVWSELHETVNIMPRNQFRG.

It belongs to the UPF0270 family.

In Enterobacter sp. (strain 638), this protein is UPF0270 protein Ent638_3781.